The primary structure comprises 100 residues: Ubiquitin-related modifier 1 homolog (100 aa).

The residue at position 100 (G100) is a 1-thioglycine. G100 participates in a covalent cross-link: Glycyl lysine isopeptide (Gly-Lys) (interchain with K-? in acceptor proteins).

The protein belongs to the URM1 family. C-terminal thiocarboxylation occurs in 2 steps, it is first acyl-adenylated (-COAMP) via the hesA/moeB/thiF part of the MOCS3 homolog, then thiocarboxylated (-COSH) via the rhodanese domain of the MOCS3 homolog.

The protein resides in the cytoplasm. It participates in tRNA modification; 5-methoxycarbonylmethyl-2-thiouridine-tRNA biosynthesis. In terms of biological role, acts as a sulfur carrier required for 2-thiolation of mcm(5)S(2)U at tRNA wobble positions of cytosolic tRNA(Lys), tRNA(Glu) and tRNA(Gln). Serves as sulfur donor in tRNA 2-thiolation reaction by being thiocarboxylated (-COSH) at its C-terminus by MOCS3. The sulfur is then transferred to tRNA to form 2-thiolation of mcm(5)S(2)U. Also acts as a ubiquitin-like protein (UBL) that is covalently conjugated via an isopeptide bond to lysine residues of target proteins. The thiocarboxylated form serves as substrate for conjugation and oxidative stress specifically induces the formation of UBL-protein conjugates. In Oryza sativa subsp. japonica (Rice), this protein is Ubiquitin-related modifier 1 homolog.